A 717-amino-acid polypeptide reads, in one-letter code: Probable inactive histone-lysine N-methyltransferase SUVR2 (717 aa).

The segment covering 61 to 73 has biased composition (basic and acidic residues); that stretch reads QAIQESEEKKADE. Positions 61-136 are disordered; that stretch reads QAIQESEEKK…LGSPTLEGPS (76 aa). The segment covering 120–130 has biased composition (low complexity); it reads SALASPSLGSP. Zn(2+)-binding residues include C445, C446, C449, C453, C462, C529, C533, C535, and C539. Residues 458–547 form the Pre-SET domain; sequence MACRCATAFN…NCGNRVVQQG (90 aa). One can recognise an SET domain in the interval 550 to 679; the sequence is NKLQVFFTPN…AMEELTWDYG (130 aa). Residues 561-563 and 635-636 contribute to the S-adenosyl-L-methionine site; these read RGW and NH. C638 lines the Zn(2+) pocket. Y678 contacts S-adenosyl-L-methionine. The region spanning 690 to 706 is the Post-SET domain; sequence SPFHCQCGSDFCRVRKQ. Zn(2+) is bound by residues C694, C696, and C701.

It belongs to the class V-like SAM-binding methyltransferase superfamily. Histone-lysine methyltransferase family. Interacts with SUVR1, CHR19, CHR28 and itself. Interacts with CHR27.

It is found in the nucleus. The protein localises to the chromosome. Probable inactive histone-lysine methyltransferase that acts as regulator of transctiptional gene silencing independently of histone H3K9 methylation. Contributes to transcriptional gene silencing at RNA-directed DNA methylation (RdDM) target loci but also at RdDM-independent target loci. Forms a complex with SUVR1 and associates with the SNF2-related chromatin-remodeling proteins CHR19, CHR27, and CHR28, thereby mediating nucleosome positioning and transcriptional silencing. Does not possess histone-lysine methyltransferase activity in vitro, and the conserved catalytic sites of SUVR2 are dispensable for its function in transcriptional gene silencing. This is Probable inactive histone-lysine N-methyltransferase SUVR2 (SUVR2) from Arabidopsis thaliana (Mouse-ear cress).